We begin with the raw amino-acid sequence, 98 residues long: DNA-binding protein Fis (98 aa).

The H-T-H motif DNA-binding region spans 74–93 (QTRAAVMMGINRGTLRKKLK).

The protein belongs to the transcriptional regulatory Fis family. As to quaternary structure, homodimer.

In terms of biological role, activates ribosomal RNA transcription. Plays a direct role in upstream activation of rRNA promoters. This is DNA-binding protein Fis from Aeromonas hydrophila subsp. hydrophila (strain ATCC 7966 / DSM 30187 / BCRC 13018 / CCUG 14551 / JCM 1027 / KCTC 2358 / NCIMB 9240 / NCTC 8049).